The sequence spans 118 residues: Thioredoxin-like protein CXXS1 (118 aa).

One can recognise a Thioredoxin domain in the interval 2–110 (ARVVKIDSAE…IKKRVDGFVQ (109 aa)).

Belongs to the thioredoxin family. In terms of tissue distribution, ubiquitous.

It localises to the cytoplasm. Possesses low disulfide reductase activity, but efficient protein disulfide isomerase activity. Does not possess deglutathionylation activity. The polypeptide is Thioredoxin-like protein CXXS1 (CXXS1) (Arabidopsis thaliana (Mouse-ear cress)).